The primary structure comprises 242 residues: ATP synthase subunit a (242 aa).

6 consecutive transmembrane segments (helical) span residues 29 to 49, 84 to 104, 114 to 134, 140 to 160, 181 to 201, and 203 to 223; these read SSIY…LAFY, FIPL…LGMT, IIVT…VGFV, FLTL…MIVI, MAGH…MIYL, and FLPI…AILQ.

This sequence belongs to the ATPase A chain family. As to quaternary structure, F-type ATPases have 2 components, CF(1) - the catalytic core - and CF(0) - the membrane proton channel. CF(1) has five subunits: alpha(3), beta(3), gamma(1), delta(1), epsilon(1). CF(0) has three main subunits: a(1), b(2) and c(9-12). The alpha and beta chains form an alternating ring which encloses part of the gamma chain. CF(1) is attached to CF(0) by a central stalk formed by the gamma and epsilon chains, while a peripheral stalk is formed by the delta and b chains.

It localises to the cell inner membrane. Functionally, key component of the proton channel; it plays a direct role in the translocation of protons across the membrane. This is ATP synthase subunit a from Rickettsia akari (strain Hartford).